A 272-amino-acid chain; its full sequence is Putative pyruvate, phosphate dikinase regulatory protein (272 aa).

G153–T160 serves as a coordination point for ADP.

It belongs to the pyruvate, phosphate/water dikinase regulatory protein family. PDRP subfamily.

It carries out the reaction N(tele)-phospho-L-histidyl/L-threonyl-[pyruvate, phosphate dikinase] + ADP = N(tele)-phospho-L-histidyl/O-phospho-L-threonyl-[pyruvate, phosphate dikinase] + AMP + H(+). The catalysed reaction is N(tele)-phospho-L-histidyl/O-phospho-L-threonyl-[pyruvate, phosphate dikinase] + phosphate + H(+) = N(tele)-phospho-L-histidyl/L-threonyl-[pyruvate, phosphate dikinase] + diphosphate. Functionally, bifunctional serine/threonine kinase and phosphorylase involved in the regulation of the pyruvate, phosphate dikinase (PPDK) by catalyzing its phosphorylation/dephosphorylation. In Chelativorans sp. (strain BNC1), this protein is Putative pyruvate, phosphate dikinase regulatory protein.